The following is a 425-amino-acid chain: Adenylosuccinate synthetase (425 aa).

GTP-binding positions include 12 to 18 (GDEGKGK) and 40 to 42 (GHT). Asp-13 (proton acceptor) is an active-site residue. Residues Asp-13 and Gly-40 each contribute to the Mg(2+) site. IMP is bound by residues 13 to 16 (DEGK), 38 to 41 (NAGH), Thr-127, Arg-141, Gln-222, Thr-237, and Arg-301. The Proton donor role is filled by His-41. Residue 297-303 (AVTGRPR) participates in substrate binding. Residues Arg-303, 329-331 (KID), and 411-413 (SVG) each bind GTP.

Belongs to the adenylosuccinate synthetase family. As to quaternary structure, homodimer. Mg(2+) serves as cofactor.

Its subcellular location is the cytoplasm. The enzyme catalyses IMP + L-aspartate + GTP = N(6)-(1,2-dicarboxyethyl)-AMP + GDP + phosphate + 2 H(+). Its pathway is purine metabolism; AMP biosynthesis via de novo pathway; AMP from IMP: step 1/2. Plays an important role in the de novo pathway of purine nucleotide biosynthesis. Catalyzes the first committed step in the biosynthesis of AMP from IMP. This Fusobacterium nucleatum subsp. nucleatum (strain ATCC 25586 / DSM 15643 / BCRC 10681 / CIP 101130 / JCM 8532 / KCTC 2640 / LMG 13131 / VPI 4355) protein is Adenylosuccinate synthetase.